The chain runs to 533 residues: UDP-glucuronosyltransferase 1-2 (533 aa).

Positions 1–27 (MDTGLCAPLRGLSGLLLLLCALPWAEG) are cleaved as a signal peptide. N-linked (GlcNAc...) asparagine glycosylation is found at Asn133, Asn141, Asn295, and Asn433. The chain crosses the membrane as a helical span at residues 491–507 (VIGFLLAIVLTVVFIVY).

The protein belongs to the UDP-glycosyltransferase family.

Its subcellular location is the microsome. It localises to the endoplasmic reticulum membrane. It catalyses the reaction glucuronate acceptor + UDP-alpha-D-glucuronate = acceptor beta-D-glucuronoside + UDP + H(+). UDPGT is of major importance in the conjugation and subsequent elimination of potentially toxic xenobiotics and endogenous compounds. The sequence is that of UDP-glucuronosyltransferase 1-2 (Ugt1a2) from Rattus norvegicus (Rat).